The primary structure comprises 233 residues: Orotidine 5'-phosphate decarboxylase (233 aa).

Residues Asp-9, Lys-31, 58-67 (DLKLHDIPNT), Thr-120, Arg-182, Gln-191, Gly-211, and Arg-212 each bind substrate. The active-site Proton donor is the Lys-60.

The protein belongs to the OMP decarboxylase family. Type 1 subfamily. Homodimer.

It catalyses the reaction orotidine 5'-phosphate + H(+) = UMP + CO2. It participates in pyrimidine metabolism; UMP biosynthesis via de novo pathway; UMP from orotate: step 2/2. Its function is as follows. Catalyzes the decarboxylation of orotidine 5'-monophosphate (OMP) to uridine 5'-monophosphate (UMP). The protein is Orotidine 5'-phosphate decarboxylase of Listeria monocytogenes serotype 4b (strain CLIP80459).